We begin with the raw amino-acid sequence, 622 residues long: Chaperone protein HscA homolog (622 aa).

Belongs to the heat shock protein 70 family.

Functionally, chaperone involved in the maturation of iron-sulfur cluster-containing proteins. Has a low intrinsic ATPase activity which is markedly stimulated by HscB. The chain is Chaperone protein HscA homolog from Burkholderia cenocepacia (strain ATCC BAA-245 / DSM 16553 / LMG 16656 / NCTC 13227 / J2315 / CF5610) (Burkholderia cepacia (strain J2315)).